The sequence spans 183 residues: Calmodulin-like protein 3 (183 aa).

4 consecutive EF-hand domains span residues 7–42 (EQIA…LGQS), 43–78 (PTEA…KLRD), 80–115 (GAED…LSDP), and 116–151 (LSDD…KRRQ). Residues Asp20, Asp22, Asp24, Thr26, Glu31, Asp56, Asp58, Ser60, Ser62, Glu67, Asp93, Asp95, Asn97, Glu104, Asp129, Asp131, Asp133, Gln135, and Glu140 each contribute to the Ca(2+) site. Residues 154–183 (MEGHGSGGHRSSNSHKKSGCCGPNSSCTIL) are disordered. 2 S-palmitoyl cysteine lipidation sites follow: Cys173 and Cys174. Cys180 is modified (cysteine methyl ester). The S-farnesyl cysteine moiety is linked to residue Cys180. Residues 181–183 (TIL) constitute a propeptide, removed in mature form.

Belongs to the calmodulin family.

The protein resides in the membrane. In terms of biological role, potential calcium sensor. This is Calmodulin-like protein 3 (CML3) from Oryza sativa subsp. japonica (Rice).